The chain runs to 141 residues: Nucleoside diphosphate kinase (141 aa).

Lys9, Phe57, Arg85, Thr91, Arg102, and Asn112 together coordinate ATP. His115 functions as the Pros-phosphohistidine intermediate in the catalytic mechanism.

The protein belongs to the NDK family. As to quaternary structure, homotetramer. Requires Mg(2+) as cofactor.

The protein resides in the cytoplasm. The catalysed reaction is a 2'-deoxyribonucleoside 5'-diphosphate + ATP = a 2'-deoxyribonucleoside 5'-triphosphate + ADP. The enzyme catalyses a ribonucleoside 5'-diphosphate + ATP = a ribonucleoside 5'-triphosphate + ADP. Its function is as follows. Major role in the synthesis of nucleoside triphosphates other than ATP. The ATP gamma phosphate is transferred to the NDP beta phosphate via a ping-pong mechanism, using a phosphorylated active-site intermediate. The protein is Nucleoside diphosphate kinase of Chlamydia caviae (strain ATCC VR-813 / DSM 19441 / 03DC25 / GPIC) (Chlamydophila caviae).